Reading from the N-terminus, the 634-residue chain is Sodium-dependent neutral amino acid transporter B(0)AT1 (634 aa).

The Cytoplasmic segment spans residues 1-41 (MVRLVLPNPGLDARIPSLAELETIEQEEASSRPKWDNKAQY). S17 is subject to Phosphoserine. The helical transmembrane segment at 42–62 (MLTCLGFCVGLGNVWRFPYLC) threads the bilayer. The Extracellular portion of the chain corresponds to 63–67 (QSHGG). The helical transmembrane segment at 68-88 (GAFMIPFLILLVLEGIPLLYL) threads the bilayer. Over 89-120 (EFAIGQRLRRGSLGVWSSIHPALKGLGLASML) the chain is Cytoplasmic. A helical membrane pass occupies residues 121 to 141 (TSFMVGLYYNTIISWIMWYLF). Over 142-192 (NSFQEPLPWSDCPLNENQTGYVDECARSSPVDYFWYRETLNISTSISDSGS) the chain is Extracellular. N-linked (GlcNAc...) asparagine glycosylation is found at N158 and N182. A helical transmembrane segment spans residues 193–213 (IQWWMLLCLACAWSVLYMCTI). Residues 214-221 (RGIETTGK) lie on the Cytoplasmic side of the membrane. Residues 222-242 (AVYITSTLPYVVLTIFLIRGL) traverse the membrane as a helical segment. Over 243–268 (TLKGATNGIVFLFTPNVTELAQPDTW) the chain is Extracellular. N258 carries an N-linked (GlcNAc...) asparagine glycan. Residues 269-289 (LDAGAQVFFSFSLAFGGLISF) traverse the membrane as a helical segment. Over 290-304 (SSYNSVHNNCEKDSV) the chain is Cytoplasmic. The helical transmembrane segment at 305 to 325 (IVSIINGFTSVYVAIVVYSVI) threads the bilayer. The Extracellular segment spans residues 326–413 (GFRATQRYDD…TEAITKMPLS (88 aa)). Residues N354 and N368 are each glycosylated (N-linked (GlcNAc...) asparagine). The chain crosses the membrane as a helical span at residues 414 to 434 (PLWSVLFFIMLFCLGLSSMFG). At 435–456 (NMEGVVVPLQDLRVIPPKWPKE) the chain is on the cytoplasmic side. Residues 457-477 (VLTGLICLGTFLIGFIFTLNS) traverse the membrane as a helical segment. The Extracellular segment spans residues 478–490 (GQYWLSLLDSYAG). The chain crosses the membrane as a helical span at residues 491 to 511 (SIPLLIIAFCEMFSVVYVYGV). Topologically, residues 512 to 531 (DRFNKDIEFMIGHKPNIFWQ) are cytoplasmic. Residues 532–552 (VTWRVVSPLLMLIIFLFFFVV) form a helical membrane-spanning segment. The Extracellular portion of the chain corresponds to 553-581 (EVSQELTYSIWDPGYEEFPKSQKISYPNW). Residues 582–602 (VYVVVVIVAGVPSLTIPGYAI) form a helical membrane-spanning segment. The Cytoplasmic segment spans residues 603-634 (YKLIRNHCQKPGDHQGLVSTLSTASMNGDLKY). S627 is modified (phosphoserine).

The protein belongs to the sodium:neurotransmitter symporter (SNF) (TC 2.A.22) family. SLC6A19 subfamily. In terms of assembly, interacts in a tissue-specific manner with ACE2 in small intestine and with CLTRN in the kidney. Interacts with CLTRN; this interaction is required for trafficking of SLC6A19 to the plasma membrane and for its catalytic activation in kidneys. Interacts with ACE2; this interaction is required for trafficking of SLC6A19 to the plasma membrane and for its catalytic activation in intestine. Interacts with ANPEP; the interaction positively regulates its amino acid transporter activity. As to expression, robust expression in kidney and small intestine, with minimal expression in pancreas. Also expressed in stomach, liver, duodenum, ileocecum, colon and prostate. Not detected in testis, whole brain, cerebellum, fetal liver, spleen, skeletal muscle, uterus, heart or lung.

It is found in the cell membrane. The protein localises to the apical cell membrane. It carries out the reaction L-alanine(in) + Na(+)(in) = L-alanine(out) + Na(+)(out). The catalysed reaction is L-cysteine(in) + Na(+)(in) = L-cysteine(out) + Na(+)(out). The enzyme catalyses L-glutamine(in) + Na(+)(in) = L-glutamine(out) + Na(+)(out). It catalyses the reaction glycine(in) + Na(+)(in) = glycine(out) + Na(+)(out). It carries out the reaction L-isoleucine(in) + Na(+)(in) = L-isoleucine(out) + Na(+)(out). The catalysed reaction is L-leucine(in) + Na(+)(in) = L-leucine(out) + Na(+)(out). The enzyme catalyses L-methionine(in) + Na(+)(in) = L-methionine(out) + Na(+)(out). It catalyses the reaction L-phenylalanine(in) + Na(+)(in) = L-phenylalanine(out) + Na(+)(out). It carries out the reaction L-serine(in) + Na(+)(in) = L-serine(out) + Na(+)(out). The catalysed reaction is L-tryptophan(in) + Na(+)(in) = L-tryptophan(out) + Na(+)(out). The enzyme catalyses L-tyrosine(in) + Na(+)(in) = L-tyrosine(out) + Na(+)(out). It catalyses the reaction L-valine(in) + Na(+)(in) = L-valine(out) + Na(+)(out). Functionally, transporter that mediates resorption of neutral amino acids across the apical membrane of renal and intestinal epithelial cells. This uptake is sodium-dependent and chloride-independent. Requires CLTRN in kidney or ACE2 in intestine for cell surface expression and amino acid transporter activity. The protein is Sodium-dependent neutral amino acid transporter B(0)AT1 (SLC6A19) of Homo sapiens (Human).